The chain runs to 155 residues: Leader peptidase HopD (155 aa).

The protein belongs to the peptidase A24 family.

The protein is Leader peptidase HopD (hopD) of Salmonella typhimurium (strain LT2 / SGSC1412 / ATCC 700720).